We begin with the raw amino-acid sequence, 817 residues long: Putative ATP-dependent RNA helicase R350 (817 aa).

The segment at 1–29 (MNRRNRSNDLNPEPSIENPNNQIAEEFPG) is disordered. The span at 17–29 (ENPNNQIAEEFPG) shows a compositional bias: polar residues. Residues 93 to 271 (LNPQGPYTSI…ALMFNLLRPG (179 aa)) enclose the Helicase ATP-binding domain. An ATP-binding site is contributed by 106-113 (HGLGSGKT). A DEAH box motif is present at residues 206–209 (DEAH). The Helicase C-terminal domain maps to 495 to 661 (LAIAFMTYIS…STDEYVEDQA (167 aa)).

Belongs to the DEAD box helicase family. DEAH subfamily.

It localises to the virion. It carries out the reaction ATP + H2O = ADP + phosphate + H(+). This Acanthamoeba polyphaga mimivirus (APMV) protein is Putative ATP-dependent RNA helicase R350.